Consider the following 425-residue polypeptide: Orexin/Hypocretin receptor type 1 (425 aa).

Topologically, residues methionine 1–glutamate 46 are extracellular. The tract at residues aspartate 26–tyrosine 41 is required for response to orexin-A. A helical membrane pass occupies residues tryptophan 47–valine 67. Residues cysteine 68–asparagine 82 lie on the Cytoplasmic side of the membrane. A helical membrane pass occupies residues tyrosine 83–leucine 105. The Extracellular portion of the chain corresponds to valine 106–cysteine 119. A disulfide bridge links cysteine 119 with cysteine 202. A helical transmembrane segment spans residues lysine 120–isoleucine 140. At alanine 141–arginine 160 the chain is on the cytoplasmic side. A helical transmembrane segment spans residues alanine 161–valine 182. The Extracellular portion of the chain corresponds to methionine 183–lysine 213. A helical transmembrane segment spans residues isoleucine 214 to tyrosine 235. The Cytoplasmic segment spans residues phenylalanine 236–lysine 298. A helical membrane pass occupies residues methionine 299–lysine 321. The Extracellular portion of the chain corresponds to arginine 322–valine 336. The chain crosses the membrane as a helical span at residues tyrosine 337 to phenylalanine 360. The Cytoplasmic portion of the chain corresponds to leucine 361–proline 425.

Belongs to the G-protein coupled receptor 1 family.

It is found in the cell membrane. In terms of biological role, moderately selective excitatory receptor for orexin-A and, with a lower affinity, for orexin-B neuropeptide. Triggers an increase in cytoplasmic Ca(2+) levels in response to orexin-A binding. In Sus scrofa (Pig), this protein is Orexin/Hypocretin receptor type 1.